We begin with the raw amino-acid sequence, 358 residues long: Phosphoserine aminotransferase (358 aa).

Arg-41 contacts L-glutamate. Pyridoxal 5'-phosphate-binding positions include Ala-75–Ser-76, Trp-100, Thr-148, Asp-167, and Gln-190. Lys-191 is modified (N6-(pyridoxal phosphate)lysine). Asn-233 to Thr-234 lines the pyridoxal 5'-phosphate pocket.

Belongs to the class-V pyridoxal-phosphate-dependent aminotransferase family. SerC subfamily. In terms of assembly, homodimer. Requires pyridoxal 5'-phosphate as cofactor.

The protein resides in the cytoplasm. The enzyme catalyses O-phospho-L-serine + 2-oxoglutarate = 3-phosphooxypyruvate + L-glutamate. It carries out the reaction 4-(phosphooxy)-L-threonine + 2-oxoglutarate = (R)-3-hydroxy-2-oxo-4-phosphooxybutanoate + L-glutamate. The protein operates within amino-acid biosynthesis; L-serine biosynthesis; L-serine from 3-phospho-D-glycerate: step 2/3. It participates in cofactor biosynthesis; pyridoxine 5'-phosphate biosynthesis; pyridoxine 5'-phosphate from D-erythrose 4-phosphate: step 3/5. Its function is as follows. Catalyzes the reversible conversion of 3-phosphohydroxypyruvate to phosphoserine and of 3-hydroxy-2-oxo-4-phosphonooxybutanoate to phosphohydroxythreonine. This chain is Phosphoserine aminotransferase, found in Campylobacter jejuni subsp. doylei (strain ATCC BAA-1458 / RM4099 / 269.97).